The primary structure comprises 284 residues: MRPPISKSWPAPAKLNLFLHVTGQRDDGYHELQTLFQFIDHCDYLDFQVNLCGEIKLHSELSKVVADKDNLILQAAKSLQKHAGVTQGADIWLEKLLPMGGGLGGGSSDAATTLVALNALWNINYHVDILAEIGLKLGADVPVFIHGLASFAEGVGEQLKPVLPAEKWYLVLVPNVHVSTQAIFQSPELTRNTPKLSLSNLMSQHWSNDCEKLVIAHYPQVANALSWLVEYAPSRMTGTGACVFGEFEQEQQALAVLAELPPNMTGFVAKGMNRSPLLERLANA.

Lys14 is an active-site residue. Position 98 to 108 (98 to 108) interacts with ATP; that stretch reads PMGGGLGGGSS. Asp140 is a catalytic residue.

This sequence belongs to the GHMP kinase family. IspE subfamily.

The enzyme catalyses 4-CDP-2-C-methyl-D-erythritol + ATP = 4-CDP-2-C-methyl-D-erythritol 2-phosphate + ADP + H(+). It participates in isoprenoid biosynthesis; isopentenyl diphosphate biosynthesis via DXP pathway; isopentenyl diphosphate from 1-deoxy-D-xylulose 5-phosphate: step 3/6. Catalyzes the phosphorylation of the position 2 hydroxy group of 4-diphosphocytidyl-2C-methyl-D-erythritol. This is 4-diphosphocytidyl-2-C-methyl-D-erythritol kinase from Shewanella denitrificans (strain OS217 / ATCC BAA-1090 / DSM 15013).